The primary structure comprises 442 residues: Tubulin beta chain (442 aa).

Positions 11, 67, 136, 140, 141, 142, and 202 each coordinate GTP. Glu67 serves as a coordination point for Mg(2+).

Belongs to the tubulin family. Dimer of alpha and beta chains. A typical microtubule is a hollow water-filled tube with an outer diameter of 25 nm and an inner diameter of 15 nM. Alpha-beta heterodimers associate head-to-tail to form protofilaments running lengthwise along the microtubule wall with the beta-tubulin subunit facing the microtubule plus end conferring a structural polarity. Microtubules usually have 13 protofilaments but different protofilament numbers can be found in some organisms and specialized cells. It depends on Mg(2+) as a cofactor.

The protein localises to the cytoplasm. It localises to the cytoskeleton. Its function is as follows. Tubulin is the major constituent of microtubules, a cylinder consisting of laterally associated linear protofilaments composed of alpha- and beta-tubulin heterodimers. Microtubules grow by the addition of GTP-tubulin dimers to the microtubule end, where a stabilizing cap forms. Below the cap, tubulin dimers are in GDP-bound state, owing to GTPase activity of alpha-tubulin. In Euglena gracilis, this protein is Tubulin beta chain (TUBB).